The following is a 150-amino-acid chain: Deoxyuridine 5'-triphosphate nucleotidohydrolase (150 aa).

Residues 69-71, N82, 86-88, and M96 contribute to the substrate site; these read RSG and LID.

The protein belongs to the dUTPase family. Mg(2+) is required as a cofactor.

The enzyme catalyses dUTP + H2O = dUMP + diphosphate + H(+). The protein operates within pyrimidine metabolism; dUMP biosynthesis; dUMP from dCTP (dUTP route): step 2/2. This enzyme is involved in nucleotide metabolism: it produces dUMP, the immediate precursor of thymidine nucleotides and it decreases the intracellular concentration of dUTP so that uracil cannot be incorporated into DNA. This chain is Deoxyuridine 5'-triphosphate nucleotidohydrolase, found in Acinetobacter baylyi (strain ATCC 33305 / BD413 / ADP1).